The following is a 473-amino-acid chain: MDNFKHLPEPFRIRVIEPVKRTTREYREEAILKAGMNPFLLDSEDVFIDLLTDSGTGAITQDMQAAMFRGDEAYSGSRSYHALANAVKDIFGYEFTIPTHQGRGAEQIYIPVLIKKREIEKGLDRSKMVALSNYFFDTTQGHTQINCCVAKNVYTEEAFDTGVKADFKGNFDLEKLEEAILEAGPANVPYIVSTITCNSAGGQPVSLANLKAVYEIAKRYDIPVIMDSARFAENAYFIQQREKDYQNWSIEEITRESYKYADGLAMSAKKDAMVQMGGLLCFKDESFLDVYTECRTLCVVQEGFPTYGGLEGGAMERLAVGLYDGMRQDWLAYRINQVEYLVNGLESIGVVCQQAGGHAAFVDAGKLLPHIPADQFPAHALACELYKVAGIRAVEIGSLLLGRDPATGKQHPCPAELLRLTIPRATYTQTHMDFIIEAFGKVKANAANVKGLEFTYEPQVLRHFTARLKEIDA.

Lys270 carries the post-translational modification N6-(pyridoxal phosphate)lysine.

Belongs to the beta-eliminating lyase family. In terms of assembly, homotetramer. Pyridoxal 5'-phosphate is required as a cofactor.

It carries out the reaction L-tryptophan + H2O = indole + pyruvate + NH4(+). Its pathway is amino-acid degradation; L-tryptophan degradation via pyruvate pathway; indole and pyruvate from L-tryptophan: step 1/1. The protein is Tryptophanase of Vibrio vulnificus (strain CMCP6).